The chain runs to 130 residues: MVNETEALPCEGGCGLYGTRVNNNLCSLCYKKSVLQHSPALRFEPETEQSQCCPPTNSPAVEEEPVKKRRCGICKRKVGMLGFKCRCGHMFCGSHRYPEEHSCPFDYKQSGRLALATQLPLIRADKLQRF.

Residues 4–38 (ETEALPCEGGCGLYGTRVNNNLCSLCYKKSVLQHS) form an A20-type zinc finger. Zn(2+) contacts are provided by C10, C14, C26, C29, C71, C74, C85, C87, C92, H95, H101, and C103. An AN1-type zinc finger spans residues 65–111 (PVKKRRCGICKRKVGMLGFKCRCGHMFCGSHRYPEEHSCPFDYKQSG).

In terms of biological role, may be involved in environmental stress response. The protein is Zinc finger A20 and AN1 domain-containing stress-associated protein 10 (SAP10) of Arabidopsis thaliana (Mouse-ear cress).